A 110-amino-acid polypeptide reads, in one-letter code: Protein YcgL (110 aa).

The YcgL domain occupies 14-98 (MFCVIYRSSK…PPEDLLKQHL (85 aa)). The disordered stretch occupies residues 88–110 (PPPEDLLKQHLSSVGQNTSHADR). The segment covering 97 to 110 (HLSSVGQNTSHADR) has biased composition (polar residues).

The polypeptide is Protein YcgL (Salmonella schwarzengrund (strain CVM19633)).